Consider the following 803-residue polypeptide: Ribonucleoside-diphosphate reductase large chain (803 aa).

The 91-residue stretch at 1 to 91 folds into the ATP-cone domain; sequence MYVVNRKGEE…TSNLHKNTSS (91 aa). Residues 5-6, 11-17, Thr52, and Asp56 each bind ATP; these read NR and EPVSFDQ. Position 215 (Ser215) interacts with GDP. Residues Cys216 and Cys442 are joined by a disulfide bond. Residues 224-226, Lys241, Arg254, and 261-262 contribute to the dTTP site; these read DSI and RG. Asn425 provides a ligand contact to GDP. Asn425 serves as the catalytic Proton acceptor. Cys427 acts as the Cysteine radical intermediate in catalysis. GDP contacts are provided by residues Glu429 and 604–607; that span reads TAST. Glu429 (proton acceptor) is an active-site residue.

This sequence belongs to the ribonucleoside diphosphate reductase large chain family. Heterodimer of a large and a small subunit.

The catalysed reaction is a 2'-deoxyribonucleoside 5'-diphosphate + [thioredoxin]-disulfide + H2O = a ribonucleoside 5'-diphosphate + [thioredoxin]-dithiol. Its activity is regulated as follows. Under complex allosteric control mediated by deoxynucleoside triphosphates and ATP binding to separate specificity and activation sites on the large subunit. The type of nucleotide bound at the specificity site determines substrate preference. It seems probable that ATP makes the enzyme reduce CDP and UDP, dGTP favors ADP reduction and dTTP favors GDP reduction. Stimulated by ATP and inhibited by dATP binding to the activity site. Provides the precursors necessary for DNA synthesis. Catalyzes the biosynthesis of deoxyribonucleotides from the corresponding ribonucleotides. The sequence is that of Ribonucleoside-diphosphate reductase large chain (RNR1) from Cryptosporidium parvum.